A 503-amino-acid polypeptide reads, in one-letter code: WD repeat-containing protein 55 homolog (503 aa).

Disordered stretches follow at residues 1-21 (MHTH…DLDD) and 35-132 (ALVG…DDLD). Composition is skewed to acidic residues over residues 12–21 (DADELDDLDD), 40–50 (DVSDSDIDEHD), and 78–96 (NAED…DEAE). WD repeat units follow at residues 157-196 (KLED…NKLL), 201-242 (VHSK…KLYE), 244-282 (AHDD…PIFE), 285-324 (EVED…LYVQ), 327-366 (PYEE…YHCD), and 411-450 (QHNM…DFGD). Residues 483 to 503 (TKEDEDNADNNDAAAGPSNSA) are disordered.

This sequence belongs to the WD repeat WDR55 family.

The chain is WD repeat-containing protein 55 homolog from Drosophila persimilis (Fruit fly).